Reading from the N-terminus, the 435-residue chain is Solute carrier family 38 member 8 (435 aa).

Helical transmembrane passes span 29 to 49 (AVFI…PWAF), 55 to 75 (VVPA…GLVI), 100 to 120 (IGKL…VAFL), 151 to 171 (FTLP…REIA), 178 to 198 (ILGT…YYLW), 218 to 240 (VFSV…SIYC), 250 to 270 (WALV…LTGV), 295 to 315 (IIVA…IVLF), 348 to 368 (MPLT…MPDL), 374 to 394 (IIGG…LICA), and 410 to 430 (VWGV…TAAA).

It belongs to the amino acid/polyamine transporter 2 family. As to expression, expressed in fetal and adult brain, and spinal cord. In the brain, it is localized in the cell body and axon of the majority of neuronal cells and in a subset of glial cells. Found throughout the neuronal retina, with higher expression levels in the inner and outer plexiform layers and the photoreceptor layer. Very weak expression is also present in the kidneys, thymus, and testes.

Its subcellular location is the membrane. It localises to the cytoplasm. The protein localises to the cell cortex. The protein resides in the cell projection. It is found in the axon. The catalysed reaction is L-glutamine(out) = L-glutamine(in). It catalyses the reaction L-alanine(in) = L-alanine(out). The enzyme catalyses L-histidine(out) = L-histidine(in). It carries out the reaction L-aspartate(out) = L-aspartate(in). The catalysed reaction is L-arginine(in) = L-arginine(out). It catalyses the reaction L-leucine(in) = L-leucine(out). Its function is as follows. Electrogenic sodium-dependent amino acid transporter with a preference for L-glutamine, L-alanine, L-histidine, L-aspartate and L-arginine. May facilitate glutamine uptake in both excitatory and inhibitory neurons. The transport mechanism and stoichiometry remain to be elucidated. This Homo sapiens (Human) protein is Solute carrier family 38 member 8.